A 121-amino-acid polypeptide reads, in one-letter code: Small ribosomal subunit protein uS13 (121 aa).

A disordered region spans residues R89–K121. Positions Q100–K121 are enriched in basic residues.

The protein belongs to the universal ribosomal protein uS13 family. As to quaternary structure, part of the 30S ribosomal subunit. Forms a loose heterodimer with protein S19. Forms two bridges to the 50S subunit in the 70S ribosome.

Located at the top of the head of the 30S subunit, it contacts several helices of the 16S rRNA. In the 70S ribosome it contacts the 23S rRNA (bridge B1a) and protein L5 of the 50S subunit (bridge B1b), connecting the 2 subunits; these bridges are implicated in subunit movement. Contacts the tRNAs in the A and P-sites. This Prochlorococcus marinus subsp. pastoris (strain CCMP1986 / NIES-2087 / MED4) protein is Small ribosomal subunit protein uS13.